The following is a 249-amino-acid chain: tRNA (guanine-N(7)-)-methyltransferase (249 aa).

The S-adenosyl-L-methionine site is built by glutamate 80, glutamate 105, aspartate 132, and aspartate 155. The active site involves aspartate 155. Residues lysine 159, aspartate 191, and 228–231 (TKFE) each bind substrate.

The protein belongs to the class I-like SAM-binding methyltransferase superfamily. TrmB family.

It catalyses the reaction guanosine(46) in tRNA + S-adenosyl-L-methionine = N(7)-methylguanosine(46) in tRNA + S-adenosyl-L-homocysteine. It functions in the pathway tRNA modification; N(7)-methylguanine-tRNA biosynthesis. Its function is as follows. Catalyzes the formation of N(7)-methylguanine at position 46 (m7G46) in tRNA. The protein is tRNA (guanine-N(7)-)-methyltransferase of Mannheimia succiniciproducens (strain KCTC 0769BP / MBEL55E).